The primary structure comprises 131 residues: Profilin (131 aa).

It belongs to the profilin family. Occurs in many kinds of cells as a complex with monomeric actin in a 1:1 ratio.

The protein resides in the cytoplasm. Its subcellular location is the cytoskeleton. Binds to actin and affects the structure of the cytoskeleton. At high concentrations, profilin prevents the polymerization of actin, whereas it enhances it at low concentrations. By binding to PIP2, it inhibits the formation of IP3 and DG. The polypeptide is Profilin (Arachis hypogaea (Peanut)).